We begin with the raw amino-acid sequence, 238 residues long: Small ribosomal subunit protein uS2c (238 aa).

The protein belongs to the universal ribosomal protein uS2 family.

The protein localises to the plastid. It is found in the chloroplast. The polypeptide is Small ribosomal subunit protein uS2c (rps2) (Jasminum nudiflorum (Winter jasmine)).